Consider the following 207-residue polypeptide: ATP-dependent Clp protease proteolytic subunit (207 aa).

Catalysis depends on Ser111, which acts as the Nucleophile. His136 is a catalytic residue.

The protein belongs to the peptidase S14 family. As to quaternary structure, fourteen ClpP subunits assemble into 2 heptameric rings which stack back to back to give a disk-like structure with a central cavity, resembling the structure of eukaryotic proteasomes. Component of the ClpAP and ClpXP complexes.

The protein localises to the cytoplasm. The catalysed reaction is Hydrolysis of proteins to small peptides in the presence of ATP and magnesium. alpha-casein is the usual test substrate. In the absence of ATP, only oligopeptides shorter than five residues are hydrolyzed (such as succinyl-Leu-Tyr-|-NHMec, and Leu-Tyr-Leu-|-Tyr-Trp, in which cleavage of the -Tyr-|-Leu- and -Tyr-|-Trp bonds also occurs).. Cleaves peptides in various proteins in a process that requires ATP hydrolysis. Has a chymotrypsin-like activity. Plays a major role in the degradation of misfolded proteins. This chain is ATP-dependent Clp protease proteolytic subunit, found in Salmonella enteritidis PT4 (strain P125109).